Reading from the N-terminus, the 352-residue chain is 26S proteasome regulatory subunit rpn-8 (352 aa).

The 137-residue stretch at V16 to I152 folds into the MPN domain. The tract at residues N303–K352 is disordered. Composition is skewed to basic and acidic residues over residues Q306–G331 and E339–K352.

Belongs to the peptidase M67A family.

In terms of biological role, acts as a regulatory subunit of the 26S proteasome which is involved in the ATP-dependent degradation of ubiquitinated proteins. This Neurospora crassa (strain ATCC 24698 / 74-OR23-1A / CBS 708.71 / DSM 1257 / FGSC 987) protein is 26S proteasome regulatory subunit rpn-8 (rpn-8).